The primary structure comprises 129 residues: D-ribose pyranase (129 aa).

His20 (proton donor) is an active-site residue. Residues Asp28, His96, and 118-120 (YAN) each bind substrate.

Belongs to the RbsD / FucU family. RbsD subfamily. As to quaternary structure, homodecamer.

The protein localises to the cytoplasm. It catalyses the reaction beta-D-ribopyranose = beta-D-ribofuranose. It participates in carbohydrate metabolism; D-ribose degradation; D-ribose 5-phosphate from beta-D-ribopyranose: step 1/2. Catalyzes the interconversion of beta-pyran and beta-furan forms of D-ribose. The sequence is that of D-ribose pyranase from Exiguobacterium sp. (strain ATCC BAA-1283 / AT1b).